Reading from the N-terminus, the 231-residue chain is ATP-dependent dethiobiotin synthetase BioD (231 aa).

An ATP-binding site is contributed by 13–18 (DVGKTV). Thr-17 lines the Mg(2+) pocket. Lys-38 is a catalytic residue. Residues Asp-55, 116–119 (EGAG), and 176–177 (NR) contribute to the ATP site. Residues Asp-55 and Glu-116 each coordinate Mg(2+).

It belongs to the dethiobiotin synthetase family. Homodimer. It depends on Mg(2+) as a cofactor.

Its subcellular location is the cytoplasm. It catalyses the reaction (7R,8S)-7,8-diammoniononanoate + CO2 + ATP = (4R,5S)-dethiobiotin + ADP + phosphate + 3 H(+). It functions in the pathway cofactor biosynthesis; biotin biosynthesis; biotin from 7,8-diaminononanoate: step 1/2. In terms of biological role, catalyzes a mechanistically unusual reaction, the ATP-dependent insertion of CO2 between the N7 and N8 nitrogen atoms of 7,8-diaminopelargonic acid (DAPA, also called 7,8-diammoniononanoate) to form a ureido ring. This Vibrio cholerae serotype O1 (strain ATCC 39315 / El Tor Inaba N16961) protein is ATP-dependent dethiobiotin synthetase BioD.